Consider the following 537-residue polypeptide: Probable protein kinase UbiB (537 aa).

Residues 24-44 (LLFEQPLLPWWLASLRLLMPW) form a helical membrane-spanning segment. Residues 126 to 494 (RFDVEPLASA…RRRQGDNWAL (369 aa)) enclose the Protein kinase domain. Residues 132–140 (LASASVAQV) and lysine 154 each bind ATP. The Proton acceptor role is filled by aspartate 289. A run of 2 helical transmembrane segments spans residues 493–513 (ALRL…AGAV) and 515–535 (LSAP…YLIV).

The protein belongs to the ABC1 family. UbiB subfamily.

Its subcellular location is the cell inner membrane. It functions in the pathway cofactor biosynthesis; ubiquinone biosynthesis [regulation]. Is probably a protein kinase regulator of UbiI activity which is involved in aerobic coenzyme Q (ubiquinone) biosynthesis. The sequence is that of Probable protein kinase UbiB from Pseudomonas entomophila (strain L48).